Here is a 251-residue protein sequence, read N- to C-terminus: Triosephosphate isomerase (251 aa).

Residue 9 to 11 (NWK) participates in substrate binding. The active-site Electrophile is His95. Residue Glu167 is the Proton acceptor of the active site. Residues Gly173, Ser213, and 234–235 (GG) contribute to the substrate site.

This sequence belongs to the triosephosphate isomerase family. Homodimer.

It is found in the cytoplasm. The enzyme catalyses D-glyceraldehyde 3-phosphate = dihydroxyacetone phosphate. It participates in carbohydrate biosynthesis; gluconeogenesis. It functions in the pathway carbohydrate degradation; glycolysis; D-glyceraldehyde 3-phosphate from glycerone phosphate: step 1/1. Functionally, involved in the gluconeogenesis. Catalyzes stereospecifically the conversion of dihydroxyacetone phosphate (DHAP) to D-glyceraldehyde-3-phosphate (G3P). This Lacticaseibacillus casei (strain BL23) (Lactobacillus casei) protein is Triosephosphate isomerase.